The following is a 256-amino-acid chain: 3-dehydroquinate dehydratase (256 aa).

3-dehydroquinate is bound by residues serine 19, 38 to 40, and arginine 68; that span reads EIR. The Proton donor/acceptor role is filled by histidine 122. The Schiff-base intermediate with substrate role is filled by lysine 147. The 3-dehydroquinate site is built by arginine 185, threonine 204, and glutamine 208.

This sequence belongs to the type-I 3-dehydroquinase family. As to quaternary structure, homodimer.

The catalysed reaction is 3-dehydroquinate = 3-dehydroshikimate + H2O. Its pathway is metabolic intermediate biosynthesis; chorismate biosynthesis; chorismate from D-erythrose 4-phosphate and phosphoenolpyruvate: step 3/7. Its function is as follows. Involved in the third step of the chorismate pathway, which leads to the biosynthesis of aromatic amino acids. Catalyzes the cis-dehydration of 3-dehydroquinate (DHQ) and introduces the first double bond of the aromatic ring to yield 3-dehydroshikimate. This is 3-dehydroquinate dehydratase from Methanospirillum hungatei JF-1 (strain ATCC 27890 / DSM 864 / NBRC 100397 / JF-1).